The following is a 359-amino-acid chain: Pheromone receptor 1 (359 aa).

7 helical membrane-spanning segments follow: residues 5–25, 33–53, 71–87, 110–130, 147–167, 206–226, and 268–288; these read VTPF…GWHI, ITLS…SVAW, LRHA…LVIA, IIID…LMIV, FLSL…IVSF, LLVL…GSVS, and LILS…MFGL. The segment at 335-359 is disordered; that stretch reads TSGGIDGSPHSEKFSINTPTKYEEA. Over residues 348–359 the composition is skewed to polar residues; the sequence is FSINTPTKYEEA.

It belongs to the G-protein coupled receptor 4 family.

It localises to the membrane. Its function is as follows. Receptor for the A2 pheromone, a prenylated mating factor. This Ustilago hordei (Barley covered smut fungus) protein is Pheromone receptor 1 (PRA1).